Reading from the N-terminus, the 300-residue chain is UDP-N-acetylenolpyruvoylglucosamine reductase (300 aa).

The region spanning 22-190 (RVGGAAEWLA…LSARFRLQPG (169 aa)) is the FAD-binding PCMH-type domain. R169 is an active-site residue. The active-site Proton donor is S220. E290 is a catalytic residue.

This sequence belongs to the MurB family. FAD serves as cofactor.

Its subcellular location is the cytoplasm. It carries out the reaction UDP-N-acetyl-alpha-D-muramate + NADP(+) = UDP-N-acetyl-3-O-(1-carboxyvinyl)-alpha-D-glucosamine + NADPH + H(+). It functions in the pathway cell wall biogenesis; peptidoglycan biosynthesis. In terms of biological role, cell wall formation. This Synechococcus sp. (strain CC9605) protein is UDP-N-acetylenolpyruvoylglucosamine reductase.